The sequence spans 357 residues: Protein-glutamate methylesterase/protein-glutamine glutaminase 5 (357 aa).

A Response regulatory domain is found at 10-127 (RVLVVDDSSF…IDAQKAFKEE (118 aa)). Asp61 is modified (4-aspartylphosphate). One can recognise a CheB-type methylesterase domain in the interval 161 to 357 (PRPAGQRYQY…IGTEITKIAG (197 aa)). Active-site residues include Ser176, His203, and Asp301.

Belongs to the CheB family. In terms of processing, phosphorylated by CheA. Phosphorylation of the N-terminal regulatory domain activates the methylesterase activity.

The protein resides in the cytoplasm. The enzyme catalyses [protein]-L-glutamate 5-O-methyl ester + H2O = L-glutamyl-[protein] + methanol + H(+). It carries out the reaction L-glutaminyl-[protein] + H2O = L-glutamyl-[protein] + NH4(+). Functionally, involved in chemotaxis. Part of a chemotaxis signal transduction system that modulates chemotaxis in response to various stimuli. Catalyzes the demethylation of specific methylglutamate residues introduced into the chemoreceptors (methyl-accepting chemotaxis proteins or MCP) by CheR. Also mediates the irreversible deamidation of specific glutamine residues to glutamic acid. The polypeptide is Protein-glutamate methylesterase/protein-glutamine glutaminase 5 (Geobacter metallireducens (strain ATCC 53774 / DSM 7210 / GS-15)).